The following is a 173-amino-acid chain: Dual-action ribosomal maturation protein DarP (173 aa).

The protein belongs to the DarP family.

The protein resides in the cytoplasm. In terms of biological role, member of a network of 50S ribosomal subunit biogenesis factors which assembles along the 30S-50S interface, preventing incorrect 23S rRNA structures from forming. Promotes peptidyl transferase center (PTC) maturation. This is Dual-action ribosomal maturation protein DarP from Pseudomonas putida (strain GB-1).